A 152-amino-acid chain; its full sequence is Protein Smg homolog (152 aa).

Belongs to the Smg family.

This chain is Protein Smg homolog, found in Bordetella avium (strain 197N).